Consider the following 206-residue polypeptide: Histidine biosynthesis bifunctional protein HisIE (206 aa).

Positions 1-117 (MGSNEVATGD…SCFPSAPGQF (117 aa)) are phosphoribosyl-AMP cyclohydrolase. The segment at 118–206 (LGSLDALVAE…AAALLESRHQ (89 aa)) is phosphoribosyl-ATP pyrophosphohydrolase.

It in the N-terminal section; belongs to the PRA-CH family. The protein in the C-terminal section; belongs to the PRA-PH family.

The protein localises to the cytoplasm. The enzyme catalyses 1-(5-phospho-beta-D-ribosyl)-ATP + H2O = 1-(5-phospho-beta-D-ribosyl)-5'-AMP + diphosphate + H(+). The catalysed reaction is 1-(5-phospho-beta-D-ribosyl)-5'-AMP + H2O = 1-(5-phospho-beta-D-ribosyl)-5-[(5-phospho-beta-D-ribosylamino)methylideneamino]imidazole-4-carboxamide. It participates in amino-acid biosynthesis; L-histidine biosynthesis; L-histidine from 5-phospho-alpha-D-ribose 1-diphosphate: step 2/9. Its pathway is amino-acid biosynthesis; L-histidine biosynthesis; L-histidine from 5-phospho-alpha-D-ribose 1-diphosphate: step 3/9. In Xanthomonas axonopodis pv. citri (strain 306), this protein is Histidine biosynthesis bifunctional protein HisIE.